The following is a 227-amino-acid chain: Chloronitrobenzene nitroreductase (227 aa).

Residue 14–18 (RRTKR) participates in FMN binding. S44 provides a ligand contact to NADP(+). FMN is bound by residues 172–173 (GL) and R215.

It belongs to the nitroreductase family. Requires FMN as cofactor.

It carries out the reaction N-phenylhydroxylamine + 2 NADP(+) + H2O = nitrobenzene + 2 NADPH + 2 H(+). Its pathway is xenobiotic degradation; nitrobenzene degradation. It functions in the pathway xenobiotic degradation; 4-chloronitrobenzene degradation. Involved in the biodegradation of chlorinated nitroaromatic compounds. Catalyzes the reduction of 4-chloronitrobenzene to yield 1-hydroxylamino-4-chlorobenzene. Probably also able to catalyze the two-electron reduction of nitrobenzene (NB) to produce a nitrosobenzene (NOB) intermediate, which is immediately reduced to hydroxylaminobenzene (HAB) by a second two-electron transfer. The sequence is that of Chloronitrobenzene nitroreductase from Comamonas testosteroni (Pseudomonas testosteroni).